We begin with the raw amino-acid sequence, 318 residues long: Beta-ketoacyl-[acyl-carrier-protein] synthase III (318 aa).

Active-site residues include Cys113 and His245. The tract at residues 246–250 is ACP-binding; that stretch reads QANIR. Asn275 is an active-site residue.

This sequence belongs to the thiolase-like superfamily. FabH family. Homodimer.

The protein localises to the cytoplasm. The enzyme catalyses malonyl-[ACP] + acetyl-CoA + H(+) = 3-oxobutanoyl-[ACP] + CO2 + CoA. Its pathway is lipid metabolism; fatty acid biosynthesis. In terms of biological role, catalyzes the condensation reaction of fatty acid synthesis by the addition to an acyl acceptor of two carbons from malonyl-ACP. Catalyzes the first condensation reaction which initiates fatty acid synthesis and may therefore play a role in governing the total rate of fatty acid production. Possesses both acetoacetyl-ACP synthase and acetyl transacylase activities. Its substrate specificity determines the biosynthesis of branched-chain and/or straight-chain of fatty acids. This Wolbachia pipientis wMel protein is Beta-ketoacyl-[acyl-carrier-protein] synthase III.